We begin with the raw amino-acid sequence, 170 residues long: Cytidine diphosphoramidate kinase (170 aa).

Belongs to the APS kinase family.

The enzyme catalyses cytidine 5'-diphosphoramidate + ATP = cytidine 3'-phospho-5'-diphosphoramidate + ADP + H(+). Its pathway is capsule biogenesis; capsule polysaccharide biosynthesis. Its function is as follows. Involved in the biosynthesis of the O-methyl phosphoramidate (MeOPN) group found on the capsular polysaccharide (CPS) of C.jejuni. Catalyzes the ATP-dependent phosphorylation of cytidine diphosphoramidate (CDP-NH(2)) to form cytidine 3'-phosphate 5'-diphosphoramidate. Can also use other substrates such as the corresponding adenine and uridine diphosphoramidate derivatives or cytidine diphosphoramidate analogs, with lower efficiency. The sequence is that of Cytidine diphosphoramidate kinase from Campylobacter jejuni subsp. jejuni serotype O:2 (strain ATCC 700819 / NCTC 11168).